The primary structure comprises 99 residues: Ribonuclease P protein component 1 (99 aa).

This sequence belongs to the eukaryotic/archaeal RNase P protein component 1 family. Consists of a catalytic RNA component and at least 4-5 protein subunits.

The protein localises to the cytoplasm. It carries out the reaction Endonucleolytic cleavage of RNA, removing 5'-extranucleotides from tRNA precursor.. In terms of biological role, part of ribonuclease P, a protein complex that generates mature tRNA molecules by cleaving their 5'-ends. The polypeptide is Ribonuclease P protein component 1 (Methanococcus vannielii).